The following is a 154-amino-acid chain: 6,7-dimethyl-8-ribityllumazine synthase (154 aa).

5-amino-6-(D-ribitylamino)uracil is bound by residues phenylalanine 21, 55–57, and 79–81; these read AFE and CVI. (2S)-2-hydroxy-3-oxobutyl phosphate is bound at residue 84-85; sequence AT. Histidine 87 acts as the Proton donor in catalysis. Residue phenylalanine 111 participates in 5-amino-6-(D-ribitylamino)uracil binding. Position 125 (arginine 125) interacts with (2S)-2-hydroxy-3-oxobutyl phosphate.

Belongs to the DMRL synthase family. Forms an icosahedral capsid composed of 60 subunits, arranged as a dodecamer of pentamers.

It catalyses the reaction (2S)-2-hydroxy-3-oxobutyl phosphate + 5-amino-6-(D-ribitylamino)uracil = 6,7-dimethyl-8-(1-D-ribityl)lumazine + phosphate + 2 H2O + H(+). Its pathway is cofactor biosynthesis; riboflavin biosynthesis; riboflavin from 2-hydroxy-3-oxobutyl phosphate and 5-amino-6-(D-ribitylamino)uracil: step 1/2. Its function is as follows. Catalyzes the formation of 6,7-dimethyl-8-ribityllumazine by condensation of 5-amino-6-(D-ribitylamino)uracil with 3,4-dihydroxy-2-butanone 4-phosphate. This is the penultimate step in the biosynthesis of riboflavin. This is 6,7-dimethyl-8-ribityllumazine synthase from Macrococcus caseolyticus (strain JCSC5402) (Macrococcoides caseolyticum).